The primary structure comprises 81 residues: Large ribosomal subunit protein uL23 (81 aa).

Belongs to the universal ribosomal protein uL23 family. In terms of assembly, part of the 50S ribosomal subunit. Contacts protein L29.

In terms of biological role, binds to 23S rRNA. One of the proteins that surrounds the polypeptide exit tunnel on the outside of the ribosome. This chain is Large ribosomal subunit protein uL23, found in Saccharolobus solfataricus (strain ATCC 35092 / DSM 1617 / JCM 11322 / P2) (Sulfolobus solfataricus).